Consider the following 366-residue polypeptide: Methyltransferase phm5 (366 aa).

S-adenosyl-L-methionine is bound by residues 204-205, Asp230, 255-256, Arg273, and Arg274; these read GG and SM.

It belongs to the class I-like SAM-binding methyltransferase superfamily. Cation-independent O-methyltransferase family.

It functions in the pathway secondary metabolite biosynthesis. Its function is as follows. Methyltransferase; part of the gene cluster that mediates the biosynthesis of the trans-fused decalin-containing tetramic acid phomasetin, the stereochemical opposite of the HIV-1 integrase inhibitor equisetin. The PKS module of phm1 together with the enoylreductase phm4 catalyze the formation of the polyketide unit which is then conjugated to L-serine by the condensation domain of the phm1 NRPS module. Activity of the Dieckmann cyclase domain (RED) of phm1 results in release of the Dieckmann product intermediate. The Diels-Alderase phm7 then uses the Dieckmann product of phm1 as substrate and catalyzes the Diels-Alder cycloaddition to form the decalin ring of N-desmethylphomasetin. N-desmethylphomasetin is further methylated to phomasetin by the methyltransferase phm5. The chain is Methyltransferase phm5 from Pyrenochaetopsis sp.